A 239-amino-acid chain; its full sequence is Cysteine-rich venom protein (239 aa).

A signal peptide spans 1–18; it reads MIVFILLSLAAVLQQSVA. The SCP domain occupies 37–165; the sequence is VDMHNSFRRS…PYNYFYVCQY (129 aa). Intrachain disulfides connect Cys-74/Cys-152, Cys-91/Cys-166, Cys-147/Cys-163, Cys-185/Cys-192, Cys-188/Cys-197, Cys-210/Cys-228, and Cys-219/Cys-232. Residues 201–234 enclose the ShKT domain; the sequence is CPINNVFTNCDSLLQQSSCEDSYITTNCGASCFC.

Belongs to the CRISP family. In terms of tissue distribution, expressed by the venom gland.

The protein resides in the secreted. In terms of biological role, blocks contraction of smooth muscle elicited by high potassium-induced depolarization, but does not block caffeine-stimulated contraction. May target voltage-gated calcium channels on smooth muscle. The polypeptide is Cysteine-rich venom protein (Cerberus rynchops (Dog-faced water snake)).